Reading from the N-terminus, the 429-residue chain is Adenylosuccinate synthetase (429 aa).

GTP contacts are provided by residues 12-18 (GDEGKGK) and 40-42 (GHT). D13 functions as the Proton acceptor in the catalytic mechanism. Positions 13 and 40 each coordinate Mg(2+). Residues 13-16 (DEGK), 38-41 (NAGH), T128, R142, Q223, T238, and R302 each bind IMP. The active-site Proton donor is the H41. Substrate is bound at residue 298–304 (TVTGRPR). Residues R304, 330-332 (LLD), and 412-414 (SVG) each bind GTP.

The protein belongs to the adenylosuccinate synthetase family. In terms of assembly, homodimer. Mg(2+) is required as a cofactor.

It is found in the cytoplasm. It carries out the reaction IMP + L-aspartate + GTP = N(6)-(1,2-dicarboxyethyl)-AMP + GDP + phosphate + 2 H(+). It participates in purine metabolism; AMP biosynthesis via de novo pathway; AMP from IMP: step 1/2. Functionally, plays an important role in the de novo pathway of purine nucleotide biosynthesis. Catalyzes the first committed step in the biosynthesis of AMP from IMP. The polypeptide is Adenylosuccinate synthetase (Lactobacillus helveticus (strain DPC 4571)).